Reading from the N-terminus, the 145-residue chain is UPF0735 ACT domain-containing protein CKL_0858 (145 aa).

Residues 69–144 form the ACT domain; the sequence is TLGLTLAHKA…SVIKVNLAAV (76 aa).

Belongs to the UPF0735 family.

The sequence is that of UPF0735 ACT domain-containing protein CKL_0858 from Clostridium kluyveri (strain ATCC 8527 / DSM 555 / NBRC 12016 / NCIMB 10680 / K1).